Here is a 32-residue protein sequence, read N- to C-terminus: EACYNAGTFCGIKPGLCCSAICLSFVCISFDF.

3 disulfides stabilise this stretch: cysteine 3/cysteine 18, cysteine 10/cysteine 22, and cysteine 17/cysteine 27. 4-hydroxyproline is present on proline 14.

It belongs to the conotoxin O1 superfamily. In terms of tissue distribution, expressed by the venom duct.

The protein localises to the secreted. In terms of biological role, delta-conotoxins bind to site 6 of voltage-gated sodium channels (Nav) and inhibit the inactivation process. This is Delta-conotoxin-like MVID from Conus magus (Magical cone).